A 216-amino-acid chain; its full sequence is MIITIDGPAGTGKSTLAKALAKTLQFNYCNTGAMYRTLAYARLQPDWQEVPLEDFLASPPFSFSFSKDAPLQAFYENRPLTSELISQEVANFASIFSKEPKVRAYMQTLQKRYASVGSCVFEGRDMGSKVFPHAEVKIFLTAEPEIRAKRRLKDLPEGSLSQEALTAELIARDQADQQRELDPLVIPADALVIDSSDLTISQILEKIVPLIHSRLA.

Position 7-15 (Gly7–Thr15) interacts with ATP.

The protein belongs to the cytidylate kinase family. Type 1 subfamily.

The protein resides in the cytoplasm. The enzyme catalyses CMP + ATP = CDP + ADP. The catalysed reaction is dCMP + ATP = dCDP + ADP. This is Cytidylate kinase from Chlamydia muridarum (strain MoPn / Nigg).